The primary structure comprises 433 residues: Histidinol dehydrogenase (433 aa).

NAD(+)-binding residues include Y130, Q191, and N214. The substrate site is built by S237, Q259, and H262. Q259 and H262 together coordinate Zn(2+). Catalysis depends on proton acceptor residues E327 and H328. Positions 328, 361, 415, and 420 each coordinate substrate. D361 contacts Zn(2+). Residue H420 coordinates Zn(2+).

This sequence belongs to the histidinol dehydrogenase family. The cofactor is Zn(2+).

It catalyses the reaction L-histidinol + 2 NAD(+) + H2O = L-histidine + 2 NADH + 3 H(+). It functions in the pathway amino-acid biosynthesis; L-histidine biosynthesis; L-histidine from 5-phospho-alpha-D-ribose 1-diphosphate: step 9/9. In terms of biological role, catalyzes the sequential NAD-dependent oxidations of L-histidinol to L-histidinaldehyde and then to L-histidine. In Ruegeria pomeroyi (strain ATCC 700808 / DSM 15171 / DSS-3) (Silicibacter pomeroyi), this protein is Histidinol dehydrogenase.